A 450-amino-acid chain; its full sequence is tRNA-2-methylthio-N(6)-dimethylallyladenosine synthase (450 aa).

Residues 14–132 (GEFFIETWGC…FPNYLNEVKK (119 aa)) enclose the MTTase N-terminal domain. Residues C23, C59, C93, C169, C173, and C176 each coordinate [4Fe-4S] cluster. The Radical SAM core domain occupies 155-385 (RKNSMKAFVT…VEVVNEISAK (231 aa)). The 63-residue stretch at 388-450 (KAYEGKIEEV…NSFSLTGEEI (63 aa)) folds into the TRAM domain.

This sequence belongs to the methylthiotransferase family. MiaB subfamily. Monomer. It depends on [4Fe-4S] cluster as a cofactor.

It localises to the cytoplasm. The enzyme catalyses N(6)-dimethylallyladenosine(37) in tRNA + (sulfur carrier)-SH + AH2 + 2 S-adenosyl-L-methionine = 2-methylsulfanyl-N(6)-dimethylallyladenosine(37) in tRNA + (sulfur carrier)-H + 5'-deoxyadenosine + L-methionine + A + S-adenosyl-L-homocysteine + 2 H(+). Its function is as follows. Catalyzes the methylthiolation of N6-(dimethylallyl)adenosine (i(6)A), leading to the formation of 2-methylthio-N6-(dimethylallyl)adenosine (ms(2)i(6)A) at position 37 in tRNAs that read codons beginning with uridine. This chain is tRNA-2-methylthio-N(6)-dimethylallyladenosine synthase, found in Clostridium botulinum (strain Okra / Type B1).